A 249-amino-acid chain; its full sequence is Protein twisted gastrulation (249 aa).

The signal sequence occupies residues 1 to 23; that stretch reads MQLLCYFVILFVGIAPWSSLAND. Asn-199 is a glycosylation site (N-linked (GlcNAc...) asparagine).

Belongs to the twisted gastrulation protein family. In terms of assembly, component of a complex composed of dpp, sog and tsg. As to expression, first appears in stage 4 embryos, expressed in two domains: a broad mid-dorsal saddle and an anterior cap, expression between the domains is continuous across the dorsal midline. At stage 5, expression is refined into 4 graded stripes in the mid-dorsal region and a paired domain in the anterior region. During stages 7 and 8, anterior expression fades and the mid dorsal stripes are located between the anterior and posterior transverse furrow (ATF and PTF). Expressing cells become incorporated into the deepening PTF.

It is found in the secreted. In terms of biological role, involved in dorsal-ventral patterning. Required for specification of a narrow strip of dorsal midline cells that will give rise to the amnioserosa, but not for specification of dorsal ectoderm cells. Inhibits BMP signaling; enhances the binding of sog to dpp, thus enhancing the antagonistic activity of sog. The chain is Protein twisted gastrulation (tsg) from Drosophila melanogaster (Fruit fly).